A 935-amino-acid polypeptide reads, in one-letter code: Protein HIRA (935 aa).

WD repeat units follow at residues 14-58 (HDTG…DKKK), 72-111 (ESQS…NSMG), 131-170 (GHSM…DRIT), 174-213 (DIQL…CVKS), 222-261 (IEET…QTWK), 277-320 (RAMP…KPLF), and 325-362 (IFNH…IGEM). A disordered region spans residues 431 to 556 (SSDIQLTKSM…RNKKRKVPAT (126 aa)). Positions 439–468 (SMEDNSKENESKNSEKTMMEERNKQIDVRK) are enriched in basic and acidic residues. Polar residues predominate over residues 480–492 (GTTTADPMTSLSS). The span at 520 to 542 (DLEDSSDSDDDDEEEEEDMEISD) shows a compositional bias: acidic residues.

This sequence belongs to the WD repeat HIR1 family.

The protein resides in the nucleus. Functionally, required for replication-independent chromatin assembly and for the periodic repression of histone gene transcription during the cell cycle. In Caenorhabditis elegans, this protein is Protein HIRA.